A 415-amino-acid polypeptide reads, in one-letter code: von Willebrand factor A domain-containing protein 1 (415 aa).

Positions 1 to 18 (MLFWTAFSMALSLRLALA) are cleaved as a signal peptide. A VWFA domain is found at 34–209 (DLLFLLDSSA…IIARELRGSI (176 aa)). Residues serine 74, serine 80, and serine 93 each carry the phosphoserine modification. 2 consecutive Fibronectin type-III domains span residues 214–305 (QPQQ…LQEE) and 307–403 (GPER…TRAP). An N-linked (GlcNAc...) asparagine glycan is attached at asparagine 264. Cysteine 369 and cysteine 393 are oxidised to a cystine. Positions 391–415 (KACTASGARTRAPQSMRPEAGPREP) are disordered.

As to quaternary structure, homodimer or homomultimer; disulfide-linked. Interacts with HSPG2. Post-translationally, N-glycosylated. Expressed at high levels in the chondrocytes. Detected in the vasculature of neural tissues, in basement membrane structures of the peripheral nervous system, in the apical ectodermal ridge of developing limb buds, and in skeletal and cardiac muscle (at protein level).

It localises to the secreted. The protein localises to the extracellular space. Its subcellular location is the extracellular matrix. The protein resides in the basement membrane. In terms of biological role, promotes matrix assembly. Involved in the organization of skeletal muscles and in the formation of neuromuscular junctions. This Mus musculus (Mouse) protein is von Willebrand factor A domain-containing protein 1 (Vwa1).